The chain runs to 132 residues: Glycine cleavage system H protein (132 aa).

The Lipoyl-binding domain occupies 24–106; it reads LVRIGISAFA…HGEGWLLVVR (83 aa). Lys-65 is modified (N6-lipoyllysine).

This sequence belongs to the GcvH family. In terms of assembly, the glycine cleavage system is composed of four proteins: P, T, L and H. The cofactor is (R)-lipoate.

Functionally, the glycine cleavage system catalyzes the degradation of glycine. The H protein shuttles the methylamine group of glycine from the P protein to the T protein. The polypeptide is Glycine cleavage system H protein (Prochlorococcus marinus (strain MIT 9313)).